Reading from the N-terminus, the 267-residue chain is Dihydropteroate synthase (267 aa).

The Pterin-binding domain maps to M1–Q251. N11 contacts Mg(2+). (7,8-dihydropterin-6-yl)methyl diphosphate is bound by residues T51, D84, N103, D167, K203, and R239–H241.

The protein belongs to the DHPS family. Requires Mg(2+) as cofactor.

The enzyme catalyses (7,8-dihydropterin-6-yl)methyl diphosphate + 4-aminobenzoate = 7,8-dihydropteroate + diphosphate. Its pathway is cofactor biosynthesis; tetrahydrofolate biosynthesis; 7,8-dihydrofolate from 2-amino-4-hydroxy-6-hydroxymethyl-7,8-dihydropteridine diphosphate and 4-aminobenzoate: step 1/2. Functionally, catalyzes the condensation of para-aminobenzoate (pABA) with 6-hydroxymethyl-7,8-dihydropterin diphosphate (DHPt-PP) to form 7,8-dihydropteroate (H2Pte), the immediate precursor of folate derivatives. The protein is Dihydropteroate synthase (folP) of Staphylococcus haemolyticus.